We begin with the raw amino-acid sequence, 786 residues long: Signal transducer and activator of transcription 5B (786 aa).

Phosphotyrosine is present on Y90. S128 carries the post-translational modification Phosphoserine. The region spanning 589–686 is the SH2 domain; the sequence is WNDGAILGFV…EVYSKYYTPV (98 aa). A phosphotyrosine mark is found at Y682 and Y699.

This sequence belongs to the transcription factor STAT family. Upon activation, forms a homodimer or a heterodimer with a related family member. Binds NR3C1. Interacts with NCOA1. Interacts with NMI. Interacts with SOCS7. Interacts (via SH2 domain) with INSR. Interacts with CPEB3; this inhibits STAT5B-mediated transcriptional activation. Post-translationally, tyrosine phosphorylated in response to signaling via activated KIT, resulting in translocation to the nucleus. Tyrosine phosphorylated in response to signaling via activated FLT3; wild-type FLT3 results in much weaker phosphorylation than constitutively activated mutant FLT3. Alternatively, can be phosphorylated by JAK2. Phosphorylation at Tyr-699 by PTK6 or HCK leads to an increase of its transcriptional activity.

It is found in the cytoplasm. It localises to the nucleus. Functionally, carries out a dual function: signal transduction and activation of transcription. Mediates cellular responses to the cytokine KITLG/SCF and other growth factors. Binds to the GAS element and activates PRL-induced transcription. Positively regulates hematopoietic/erythroid differentiation. In Rattus norvegicus (Rat), this protein is Signal transducer and activator of transcription 5B (Stat5b).